Consider the following 487-residue polypeptide: MWIILALLTLAGSRVAHGAGKNVNGVEFNLFCHIANMLNAEKIEDDKTDGLDRQAAEAWTAIDSIFTVTANESYYSEGPASAANTTDENQDAKPERVAKWVQKRNQIDKIAAPGNEKNGKYARRPRDRMSAATGAKLDTVFTLASEARVRLMQIDTEIATNKQEIRQQLGLHCSEGQGKGQSRNQHPDNAAFASDYSTACKGSTGPGKSLANDLVCICSTDTSQAQSTLQMCTSIDDANSLFSTLHKRSQCQGDFPCPHRVCAKTAETSELTETNINNCVTAFTATLGRHTKSSATNEGAYVFGSGQNSGDECNGGAATGQSCVSYHDLITAKSGTTLSGAITRLKQLQIAKAKLKARRLLLQNRERQQTRLMALADKMQELYQEALHDEVQLRKEAQNKPQETPDSDKQKACEKYHNKSKECKENGCQWSGTEETIGKCEAKPKAGTEAATTGPGERDAGATANTTGSSNSFVIKTSPLLFAFLLF.

The first 19 residues, 1 to 19 (MWIILALLTLAGSRVAHGA), serve as a signal peptide directing secretion. Asn71, Asn84, Asn418, and Asn465 each carry an N-linked (GlcNAc...) asparagine glycan. The interval 443–468 (KPKAGTEAATTGPGERDAGATANTTG) is disordered. The GPI-anchor amidated serine moiety is linked to residue Ser470. A propeptide spans 471–487 (NSFVIKTSPLLFAFLLF) (removed in mature form).

Its subcellular location is the cell membrane. Its function is as follows. VSG forms a coat on the surface of the parasite. The trypanosome evades the immune response of the host by expressing a series of antigenically distinct VSGs from an estimated 1000 VSG genes. In Trypanosoma brucei rhodesiense, this protein is Variant surface glycoprotein WRATAT B.